The primary structure comprises 175 residues: Thioredoxin M-type, chloroplastic (175 aa).

Residues 1–62 constitute a chloroplast transit peptide; it reads MALETCLRGW…ARRPSRFVCK (62 aa). Residues 63–174 form the Thioredoxin domain; sequence CKNVVDEVIV…LCTIIDKYIG (112 aa). Cys-98 and Cys-101 are joined by a disulfide.

The protein belongs to the thioredoxin family. Plant M-type subfamily. Forms a complex with heterodimeric ferredoxin-thioredoxin reductase (FTR) and ferredoxin.

It is found in the plastid. The protein resides in the chloroplast. Functionally, participates in various redox reactions through the reversible oxidation of the active center dithiol to a disulfide. The M form is known to activate NADP-malate dehydrogenase. The protein is Thioredoxin M-type, chloroplastic of Triticum aestivum (Wheat).